The following is an 80-amino-acid chain: UPF0512 protein Q (80 aa).

The protein belongs to the UPF0512 family.

The chain is UPF0512 protein Q from Dictyostelium discoideum (Social amoeba).